Reading from the N-terminus, the 214-residue chain is MKIFVDTANIEEIKKANELGVICGVTTNPSLIAKEGRDFKEVIKEITSIVDGPISGEVISMECEGMVKEAREIAKIHENMVIKIPMCAEGLKAVNILHKEGIKTNVTLIFSAVQALLAARAGASYVSPFLGRLDDIGSTGMTLIEDISEIFAVHGIETEIISASVRNPIHVLECAKAGSDIATIPYNVIMQMIKHPLTDAGIEKFLKDYEGMNK.

The active-site Schiff-base intermediate with substrate is the K83.

The protein belongs to the transaldolase family. Type 3B subfamily.

It is found in the cytoplasm. It carries out the reaction D-sedoheptulose 7-phosphate + D-glyceraldehyde 3-phosphate = D-erythrose 4-phosphate + beta-D-fructose 6-phosphate. Its pathway is carbohydrate degradation; pentose phosphate pathway; D-glyceraldehyde 3-phosphate and beta-D-fructose 6-phosphate from D-ribose 5-phosphate and D-xylulose 5-phosphate (non-oxidative stage): step 2/3. Functionally, transaldolase is important for the balance of metabolites in the pentose-phosphate pathway. This Clostridium botulinum (strain Alaska E43 / Type E3) protein is Probable transaldolase.